The following is a 148-amino-acid chain: Large ribosomal subunit protein bL27m (148 aa).

The N-terminal 30 residues, 1 to 30, are a transit peptide targeting the mitochondrion; it reads MAAAALTLRTRAAVTALLSPTAPTALAVRH. The interval 28–48 is disordered; it reads VRHASKKTGGSSKNLGGKSRG.

The protein belongs to the bacterial ribosomal protein bL27 family. In terms of assembly, component of the mitochondrial ribosome large subunit (39S) which comprises a 16S rRNA and about 50 distinct proteins.

The protein resides in the mitochondrion. This Mus musculus (Mouse) protein is Large ribosomal subunit protein bL27m (Mrpl27).